The chain runs to 135 residues: Transcription antitermination protein NusB (135 aa).

It belongs to the NusB family.

Functionally, involved in transcription antitermination. Required for transcription of ribosomal RNA (rRNA) genes. Binds specifically to the boxA antiterminator sequence of the ribosomal RNA (rrn) operons. The chain is Transcription antitermination protein NusB from Clostridium perfringens (strain SM101 / Type A).